Consider the following 347-residue polypeptide: Protein RecA (347 aa).

65 to 72 (GPESSGKT) is a binding site for ATP. Residues 327–336 (KFEPTELSRE) show a composition bias toward basic and acidic residues. Residues 327–347 (KFEPTELSREEGDEDTLEDAM) form a disordered region. Over residues 337-347 (EGDEDTLEDAM) the composition is skewed to acidic residues.

It belongs to the RecA family.

It localises to the cytoplasm. Functionally, can catalyze the hydrolysis of ATP in the presence of single-stranded DNA, the ATP-dependent uptake of single-stranded DNA by duplex DNA, and the ATP-dependent hybridization of homologous single-stranded DNAs. It interacts with LexA causing its activation and leading to its autocatalytic cleavage. The sequence is that of Protein RecA from Xylella fastidiosa (strain M23).